The chain runs to 254 residues: Ribonuclease HII (254 aa).

An RNase H type-2 domain is found at 70–254; sequence RYICGIDEVG…ASFIKNLTSC (185 aa). A divalent metal cation is bound by residues D76, E77, and D168.

Belongs to the RNase HII family. Mn(2+) is required as a cofactor. It depends on Mg(2+) as a cofactor.

It is found in the cytoplasm. The enzyme catalyses Endonucleolytic cleavage to 5'-phosphomonoester.. In terms of biological role, endonuclease that specifically degrades the RNA of RNA-DNA hybrids. In Lachnoclostridium phytofermentans (strain ATCC 700394 / DSM 18823 / ISDg) (Clostridium phytofermentans), this protein is Ribonuclease HII.